The chain runs to 143 residues: Nucleoside diphosphate kinase (143 aa).

ATP is bound by residues Lys-11, Phe-59, Arg-87, Thr-93, Arg-104, and Asn-114. His-117 (pros-phosphohistidine intermediate) is an active-site residue.

It belongs to the NDK family. As to quaternary structure, homotetramer. Mg(2+) serves as cofactor.

The protein resides in the cytoplasm. It carries out the reaction a 2'-deoxyribonucleoside 5'-diphosphate + ATP = a 2'-deoxyribonucleoside 5'-triphosphate + ADP. It catalyses the reaction a ribonucleoside 5'-diphosphate + ATP = a ribonucleoside 5'-triphosphate + ADP. In terms of biological role, major role in the synthesis of nucleoside triphosphates other than ATP. The ATP gamma phosphate is transferred to the NDP beta phosphate via a ping-pong mechanism, using a phosphorylated active-site intermediate. The chain is Nucleoside diphosphate kinase from Salmonella agona (strain SL483).